A 713-amino-acid polypeptide reads, in one-letter code: Calpastatin (713 aa).

2 disordered regions span residues 1-187 and 211-506; these read MNPT…LDPM and DKKE…PVLP. Residues 21-30 show a composition bias toward basic residues; the sequence is PNKKRHKKQA. K32 is covalently cross-linked (Glycyl lysine isopeptide (Lys-Gly) (interchain with G-Cter in SUMO2)). Residues 46 to 63 show a composition bias toward basic and acidic residues; sequence VVHEKKTQEVKPKEHPEP. K50 carries the post-translational modification N6-acetyllysine. The span at 85–94 shows a compositional bias: polar residues; it reads SRSNEQPTSE. 2 positions are modified to phosphoserine: S87 and S134. T136 bears the Phosphothreonine mark. The Inhibitory domain 1 repeat unit spans residues 171 to 223; sequence TEEDNTTYTGPEVLDPMSSTYIEELGKREVTLPPKYRELLDKKEGIPVPPPDT. S244 is modified (phosphoserine). Composition is skewed to basic and acidic residues over residues 248-258, 304-332, and 342-367; these read DGKKTEKEKST, RKSEPELDLSSIKEIDEAKAKEEKLKKCG, and YRLKPAMDKDGKPLLPEAEEKPKPLS. The Inhibitory domain 2 repeat unit spans residues 307–359; that stretch reads EPELDLSSIKEIDEAKAKEEKLKKCGEDDETVPPEYRLKPAMDKDGKPLLPEA. Residues S367, S369, and S376 each carry the phosphoserine modification. Residues 370-379 show a composition bias toward acidic residues; that stretch reads ELIDELSEDF. Residues 380–397 are compositionally biased toward basic and acidic residues; it reads DQSKRKEKQSKPTEKTKE. S441 bears the Phosphoserine mark. Basic and acidic residues predominate over residues 443 to 502; the sequence is GKKEADPEDGKPVEDKVKEKAKEEDREKLGEKEETIPPDYRLEEVKDKDGKTLPHKDPKE. Residues 447–500 form an Inhibitory domain 3 repeat; it reads ADPEDGKPVEDKVKEKAKEEDREKLGEKEETIPPDYRLEEVKDKDGKTLPHKDP. Phosphoserine is present on residues S517 and S528. Residues 536–713 are disordered; that stretch reads SAAVSEVVSQ…KQKSDGKSTS (178 aa). Residues 542–553 show a composition bias toward polar residues; sequence VVSQTSAPTTHS. 2 positions are modified to phosphoserine: S575 and S577. An Inhibitory domain 4 repeat occupies 583–636; that stretch reads PDPDENKPIEDKVKEKAEAEHRDKLGERDDTIPPEYRHLLDKDEEGKSTKPPTK. Basic and acidic residues-rich tracts occupy residues 583 to 646 and 691 to 713; these read PDPD…KPEA and KAKDSTKAKEETSKQKSDGKSTS.

The protein belongs to the protease inhibitor I27 (calpastatin) family.

Specific inhibition of calpain (calcium-dependent cysteine protease). Plays a key role in postmortem tenderization of meat and have been proposed to be involved in muscle protein degradation in living tissue. The polypeptide is Calpastatin (CAST) (Sus scrofa (Pig)).